The sequence spans 64 residues: Large ribosomal subunit protein bL35 (64 aa).

2 disordered regions span residues 1-22 (MPKA…TGKI) and 34-64 (EHKP…LLNG). The segment covering 34–46 (EHKPTTRTRRLEG) has biased composition (basic and acidic residues). Residues 50 to 64 (VSANDTKRVNSLLNG) are compositionally biased toward polar residues.

The protein belongs to the bacterial ribosomal protein bL35 family.

The polypeptide is Large ribosomal subunit protein bL35 (Mycolicibacterium paratuberculosis (strain ATCC BAA-968 / K-10) (Mycobacterium paratuberculosis)).